Here is a 1557-residue protein sequence, read N- to C-terminus: DVA-1 polyprotein (1557 aa).

The signal sequence occupies residues 1 to 21 (MKSTSFITLLLLSYFIVEAHS). Positions 22–60 (SIFHWDDERLFKHDDTHSWLTDVQKAELETLKHQPIQLR) are excised as a propeptide. Residue Asn997 is glycosylated (N-linked (GlcNAc...) asparagine).

It belongs to the NPA family. In terms of processing, nematode polyprotein allergens (NPAs) are synthesized as large polypeptides that are subsequently proteolytically cleaved to active polypeptide units.

Has high binding affinity for fatty acids and retinoids. The polypeptide is DVA-1 polyprotein (DVA-1) (Dictyocaulus viviparus (Bovine lungworm)).